A 252-amino-acid polypeptide reads, in one-letter code: TVP38/TMEM64 family membrane protein Mb1528c (252 aa).

6 helical membrane-spanning segments follow: residues 32–52 (IVGT…VPVP), 64–84 (LGAW…VPPF), 88–108 (AFTL…IAVV), 149–169 (WLAI…INYA), 177–197 (ILSF…AVVI), and 209–229 (LLIL…VYEI).

This sequence belongs to the TVP38/TMEM64 family.

The protein localises to the cell membrane. In Mycobacterium bovis (strain ATCC BAA-935 / AF2122/97), this protein is TVP38/TMEM64 family membrane protein Mb1528c.